The following is a 350-amino-acid chain: tRNA uridine(34) hydroxylase (350 aa).

Residues 146 to 240 (DDPDAVFIDM…YARRARAQGL (95 aa)) enclose the Rhodanese domain. Cysteine 200 functions as the Cysteine persulfide intermediate in the catalytic mechanism. The segment covering 319–328 (RRRRAGRENG) has biased composition (basic and acidic residues). The disordered stretch occupies residues 319 to 350 (RRRRAGRENGNKIFNKSRGRLNSKLSIPDPAE).

The protein belongs to the TrhO family.

It catalyses the reaction uridine(34) in tRNA + AH2 + O2 = 5-hydroxyuridine(34) in tRNA + A + H2O. Functionally, catalyzes oxygen-dependent 5-hydroxyuridine (ho5U) modification at position 34 in tRNAs. In Salmonella newport (strain SL254), this protein is tRNA uridine(34) hydroxylase.